We begin with the raw amino-acid sequence, 449 residues long: MNYKNKNLVSESGLTQKHLIHGDEELFQRELETIFARNWLFLTHDSLIPSPGDYVTAKMGVDEVIVSRQNDGSIRAFLNVCRHRGKTLVHAEAGNAKGFVCSYHGWGFGANGELQSVPFEKELYGEALDKKCMGLKEVARVESFHGFIYGCFDEEAPSLKDYMGDAGWYLEPMFKHSGGLELIGPPGKVIIKANWKAPAENFTGDAYHVGWTHASSLRSGQSVFSSLAGNAALPPEGAGLQMTSKYGSGMGVLWDGYSGVHSADLVPELMAFGGAKQERLNKEIGEVRARIYRSHLNCTVFPNNSFLTCSGVFKVWHPIDANTTEVWTYAMVEKDMPEDLKRRLVDAVQRTFGPAGFWESDDNDNMETVSQNAKKYQSRDGDLVSNLGFGGDVYGDEVYPGIVGKSAIGETSYRGFYRAYGAHISSSSWAEFEDVSKNWHTELAKTTDR.

Residues 39 to 137 enclose the Rieske domain; that stretch reads WLFLTHDSLI…LDKKCMGLKE (99 aa). Cys-81, His-83, Cys-101, and His-104 together coordinate [2Fe-2S] cluster. Fe cation is bound by residues His-208, His-213, and Asp-362.

The protein belongs to the bacterial ring-hydroxylating dioxygenase alpha subunit family. In terms of assembly, the naphthalene dioxygenase (NDO) multicomponent enzyme system is composed of an electron transfer component and a dioxygenase component (iron sulfur protein (ISP)). The electron transfer component is composed of a ferredoxin reductase (NdoR) and a ferredoxin (NdoA), and the dioxygenase component is formed of a heterohexamer (trimer of heterodimers) of three large alpha subunits (NdoB) and three small beta subunits (NdoC). [2Fe-2S] cluster serves as cofactor. Fe(2+) is required as a cofactor.

The enzyme catalyses naphthalene + NADH + O2 + H(+) = (1R,2S)-1,2-dihydronaphthalene-1,2-diol + NAD(+). It participates in aromatic compound metabolism; naphthalene degradation. Component of the naphthalene dioxygenase (NDO) multicomponent enzyme system which catalyzes the incorporation of both atoms of molecular oxygen into naphthalene to form cis-(1R,2S)-dihydroxy-1,2-dihydronaphthalene. The alpha subunit has a catalytic role in the holoenzyme. This is Naphthalene 1,2-dioxygenase system, large oxygenase component from Pseudomonas aeruginosa.